Consider the following 312-residue polypeptide: Glycerol-3-phosphate phosphatase (312 aa).

The Nucleophile role is filled by Asp30. Mg(2+)-binding residues include Asp30, Asp32, and Asp251. Asp32 (proton donor) is an active-site residue.

This sequence belongs to the HAD-like hydrolase superfamily. CbbY/CbbZ/Gph/YieH family. As to quaternary structure, homodimer. Requires Mg(2+) as cofactor.

The enzyme catalyses O-phospho-L-tyrosyl-[protein] + H2O = L-tyrosyl-[protein] + phosphate. It catalyses the reaction sn-glycerol 1-phosphate + H2O = glycerol + phosphate. The catalysed reaction is sn-glycerol 3-phosphate + H2O = glycerol + phosphate. Functionally, glycerol-3-phosphate phosphatase hydrolyzing glycerol-3-phosphate into glycerol. Thereby, regulates the cellular levels of glycerol-3-phosphate a metabolic intermediate of glucose, lipid and energy metabolism. Was also shown to have a 2-phosphoglycolate phosphatase activity and a tyrosine-protein phosphatase activity. However, their physiological relevance is unclear. In vitro, also has a phosphatase activity toward ADP, ATP, GDP and GTP. In Gallus gallus (Chicken), this protein is Glycerol-3-phosphate phosphatase.